Consider the following 240-residue polypeptide: ATP-dependent dethiobiotin synthetase BioD (240 aa).

Residue 15-20 (EIGKTF) coordinates ATP. Thr19 provides a ligand contact to Mg(2+). Lys40 is a catalytic residue. ATP-binding positions include Asp57, 118 to 121 (EGVG), and 178 to 179 (NR). Positions 57 and 118 each coordinate Mg(2+).

It belongs to the dethiobiotin synthetase family. As to quaternary structure, homodimer. Mg(2+) serves as cofactor.

It is found in the cytoplasm. The catalysed reaction is (7R,8S)-7,8-diammoniononanoate + CO2 + ATP = (4R,5S)-dethiobiotin + ADP + phosphate + 3 H(+). Its pathway is cofactor biosynthesis; biotin biosynthesis; biotin from 7,8-diaminononanoate: step 1/2. In terms of biological role, catalyzes a mechanistically unusual reaction, the ATP-dependent insertion of CO2 between the N7 and N8 nitrogen atoms of 7,8-diaminopelargonic acid (DAPA, also called 7,8-diammoniononanoate) to form a ureido ring. This Burkholderia thailandensis (strain ATCC 700388 / DSM 13276 / CCUG 48851 / CIP 106301 / E264) protein is ATP-dependent dethiobiotin synthetase BioD.